The primary structure comprises 116 residues: UPF0329 protein ECU05_1650 (116 aa).

It belongs to the UPF0329 family.

This Encephalitozoon cuniculi (strain GB-M1) (Microsporidian parasite) protein is UPF0329 protein ECU05_1650.